Consider the following 266-residue polypeptide: Type 1 encapsulin shell protein (266 aa).

Belongs to the encapsulin family. Family 1 subfamily. As to quaternary structure, this encapsulin nanocompartment is formed by 60 subunits; monomers form 12 pentamers which assemble to form shells. Shells are loaded with 4 encapsulated ferritin-like protein decamers (EncFtn) in a tetrahedral arrangement. A 3 nm gap is consistently seen between the shell and the cargo.

Its subcellular location is the encapsulin nanocompartment. Shell component of a type 1 encapsulin nanocompartment. Assembles into proteinaceous shells about 21 nm in diameter. Small pores form at, or close to, the 2-, 3-, and 5-fold symmetry axes. Data analysis suggests the 5-fold pores open and close with maximal and minimal aperatures of 15 and 5 Angstroms. Cargo protein Fer (ferritin-like protein, probably stores iron) is targeted to the interior via its C-terminal extension; empty intact shells can be isolated in the absence of cargo protein. The protein is Type 1 encapsulin shell protein of Haliangium ochraceum (strain DSM 14365 / JCM 11303 / SMP-2).